The following is a 228-amino-acid chain: L-ribulose-5-phosphate 4-epimerase UlaF (228 aa).

Residues 26–27 (GN), 43–44 (SG), and 72–73 (SS) contribute to the substrate site. Residues Asp74, His93, and His95 each contribute to the Zn(2+) site. Residue Asp118 is the Proton donor/acceptor of the active site. His167 is a binding site for Zn(2+). Tyr225 functions as the Proton donor/acceptor in the catalytic mechanism.

It belongs to the aldolase class II family. AraD/FucA subfamily. The cofactor is Zn(2+).

It catalyses the reaction L-ribulose 5-phosphate = D-xylulose 5-phosphate. Its pathway is cofactor degradation; L-ascorbate degradation; D-xylulose 5-phosphate from L-ascorbate: step 4/4. Catalyzes the isomerization of L-ribulose 5-phosphate to D-xylulose 5-phosphate. Is involved in the anaerobic L-ascorbate utilization. The protein is L-ribulose-5-phosphate 4-epimerase UlaF of Salmonella paratyphi B (strain ATCC BAA-1250 / SPB7).